A 608-amino-acid chain; its full sequence is Histone-arginine methyltransferase CARM1 (608 aa).

A2 bears the N-acetylalanine mark. The segment at 27–138 is interaction with C9orf72; that stretch reads ATVSVFPGAR…GHTLERSVFS (112 aa). The SAM-dependent MTase PRMT-type domain maps to 146–453; it reads AVQYFQFYGY…KRQSYDISIV (308 aa). 4 residues coordinate S-adenosyl-L-methionine: Q159, R168, G192, and E214. At S216 the chain carries Phosphoserine. K227 is covalently cross-linked (Glycyl lysine isopeptide (Lys-Gly) (interchain with G-Cter in ubiquitin)). S-adenosyl-L-methionine is bound by residues E243 and S271. The required for nuclear translocation stretch occupies residues 346–379; it reads RILMAKSVKYTVNFLEAKEGDLHRIEIPFKFHML. The transactivation domain stretch occupies residues 499–608; sequence TGSTYNLSSG…IPTNTMHYGS (110 aa). R550 is subject to Dimethylated arginine.

Belongs to the class I-like SAM-binding methyltransferase superfamily. Protein arginine N-methyltransferase family. Homodimer. Interacts with NR1H4. Interacts with SNRPC. Interacts with the C-terminus of NCOA2/GRIP1, NCO3/ACTR and NCOA1/SRC1. Part of a complex consisting of CARM1, EP300/P300 and NCOA2/GRIP1. Interacts with FLII, TP53, myogenic factor MEF2, EP300/P300, TRIM24, CREBBP and CTNNB1. Interacts with RELA. Identified in a complex containing CARM1, TRIM24 and NCOA2/GRIP1. Interacts with NCOA3/SRC3. Interacts with SKP2. Interacts (via PH domain-like fold) with C9orf72. Interacts with PARP1; promoting PARP1 recruimtent to replication forks. In terms of assembly, (Microbial infection) Interacts with HTLV-1 protein Tax. Post-translationally, auto-methylated on Arg-550. Methylation enhances transcription coactivator activity. Methylation is required for its role in the regulation of pre-mRNA alternative splicing. Phosphorylation at Ser-216 is strongly increased during mitosis, and decreases rapidly to a very low, basal level after entry into the G1 phase of the cell cycle. Phosphorylation at Ser-216 may promote location in the cytosol. Phosphorylation at Ser-216 interferes with S-adenosyl-L-methionine binding and strongly reduces methyltransferase activity. In terms of processing, ubiquitinated by E3 ubiquitin-protein ligase complex containing FBXO9 at Lys-227; leading to proteasomal degradation. As to expression, overexpressed in prostate adenocarcinomas and high-grade prostatic intraepithelial neoplasia.

The protein resides in the nucleus. It is found in the cytoplasm. Its subcellular location is the chromosome. It catalyses the reaction L-arginyl-[protein] + 2 S-adenosyl-L-methionine = N(omega),N(omega)-dimethyl-L-arginyl-[protein] + 2 S-adenosyl-L-homocysteine + 2 H(+). Methylation of H3R17 (H3R17me) by CARM1 is stimulated by preacetylation of H3 'Lys-18' (H3K18ac) H3 'Lys-23' (H3K23ac) by EP300 and blocked by citrullination of H3 'Arg-17' (H3R17ci) by PADI4. In terms of biological role, methylates (mono- and asymmetric dimethylation) the guanidino nitrogens of arginyl residues in several proteins involved in DNA packaging, transcription regulation, pre-mRNA splicing, and mRNA stability. Recruited to promoters upon gene activation together with histone acetyltransferases from EP300/P300 and p160 families, methylates histone H3 at 'Arg-17' (H3R17me), forming mainly asymmetric dimethylarginine (H3R17me2a), leading to activation of transcription via chromatin remodeling. During nuclear hormone receptor activation and TCF7L2/TCF4 activation, acts synergically with EP300/P300 and either one of the p160 histone acetyltransferases NCOA1/SRC1, NCOA2/GRIP1 and NCOA3/ACTR or CTNNB1/beta-catenin to activate transcription. During myogenic transcriptional activation, acts together with NCOA3/ACTR as a coactivator for MEF2C. During monocyte inflammatory stimulation, acts together with EP300/P300 as a coactivator for NF-kappa-B. Acts as a coactivator for PPARG, promotes adipocyte differentiation and the accumulation of brown fat tissue. Plays a role in the regulation of pre-mRNA alternative splicing by methylation of splicing factors. Also seems to be involved in p53/TP53 transcriptional activation. Methylates EP300/P300, both at 'Arg-2142', which may loosen its interaction with NCOA2/GRIP1, and at 'Arg-580' and 'Arg-604' in the KIX domain, which impairs its interaction with CREB and inhibits CREB-dependent transcriptional activation. Also methylates arginine residues in RNA-binding proteins PABPC1, ELAVL1 and ELAV4, which may affect their mRNA-stabilizing properties and the half-life of their target mRNAs. Acts as a transcriptional coactivator of ACACA/acetyl-CoA carboxylase by enriching H3R17 methylation at its promoter, thereby positively regulating fatty acid synthesis. Independently of its methyltransferase activity, involved in replication fork progression: promotes PARP1 recruitment to replication forks, leading to poly-ADP-ribosylation of chromatin at replication forks and reduced fork speed. The polypeptide is Histone-arginine methyltransferase CARM1 (CARM1) (Homo sapiens (Human)).